The chain runs to 166 residues: Small ribosomal subunit protein uS5 (166 aa).

In terms of domain architecture, S5 DRBM spans 11–74 (LQEKLIAVNR…EKARRNMKTV (64 aa)).

Belongs to the universal ribosomal protein uS5 family. In terms of assembly, part of the 30S ribosomal subunit. Contacts proteins S4 and S8.

Functionally, with S4 and S12 plays an important role in translational accuracy. Its function is as follows. Located at the back of the 30S subunit body where it stabilizes the conformation of the head with respect to the body. This is Small ribosomal subunit protein uS5 from Photorhabdus laumondii subsp. laumondii (strain DSM 15139 / CIP 105565 / TT01) (Photorhabdus luminescens subsp. laumondii).